A 130-amino-acid chain; its full sequence is MTGNDPFANALSALNNAESVGHLEQTVSPASNEIGSVLEVFYDRGYIDGFSFVDDGKAGEFEVELKGAINECGPVKPRYSAGADEFEKWEKRFLPARDYGTLVVTTSHGIMSHYEAREQGVGGQVIAYVY.

This sequence belongs to the universal ribosomal protein uS8 family. Part of the 30S ribosomal subunit.

One of the primary rRNA binding proteins, it binds directly to 16S rRNA central domain where it helps coordinate assembly of the platform of the 30S subunit. The polypeptide is Small ribosomal subunit protein uS8 (Haloarcula marismortui (strain ATCC 43049 / DSM 3752 / JCM 8966 / VKM B-1809) (Halobacterium marismortui)).